The chain runs to 506 residues: Probable cytochrome P450 519E1 (506 aa).

Residues 1-21 (MGIGLIILYLLIGLLAYDFTK) traverse the membrane as a helical segment. C453 provides a ligand contact to heme.

The protein belongs to the cytochrome P450 family. The cofactor is heme.

It localises to the membrane. The sequence is that of Probable cytochrome P450 519E1 (cyp519E1) from Dictyostelium discoideum (Social amoeba).